The sequence spans 519 residues: Putative thymidine phosphorylase (519 aa).

This sequence belongs to the thymidine/pyrimidine-nucleoside phosphorylase family. Type 2 subfamily.

The enzyme catalyses thymidine + phosphate = 2-deoxy-alpha-D-ribose 1-phosphate + thymine. This Maricaulis maris (strain MCS10) (Caulobacter maris) protein is Putative thymidine phosphorylase.